Here is a 285-residue protein sequence, read N- to C-terminus: Secreted RxLR effector protein 106 (285 aa).

The signal sequence occupies residues 1-24 (MSVRYAGLLLAAVAVSAHINEVNS). Residues 42-54 (RDLRSADNGNEER) carry the RxLR-dEER motif. 2 N-linked (GlcNAc...) asparagine glycosylation sites follow: Asn-182 and Asn-187. Residues 220 to 229 (IEGDKEKKGG) show a composition bias toward basic and acidic residues. Residues 220 to 262 (IEGDKEKKGGPDYVEGTESRGKKRGQTEAPDLEPGLTPKQKRL) are disordered. The Bipartite nuclear localization signal signature appears at 239-264 (RGKKRGQTEAPDLEPGLTPKQKRLKR).

The protein belongs to the RxLR effector family. As to quaternary structure, interacts with host RCD1 and SRO1 transcription co-regulators.

It localises to the secreted. Its subcellular location is the host nucleus. Secreted effector that suppresses pathogen-associated molecular pattern (PAMP)-triggered immunity (PTI) in host plants. Binds to RCD1 and SRO1 transcription co-regulators to attenuate transcriptional activation of salicylic acid (SA)-induced defense genes and alters plant growth responses to light. Suppresses SA signal transduction but not SA levels. The protein is Secreted RxLR effector protein 106 of Hyaloperonospora arabidopsidis (strain Emoy2) (Downy mildew agent).